The following is a 241-amino-acid chain: Proteasome subunit alpha (241 aa).

The protein belongs to the peptidase T1A family. As to quaternary structure, the 20S proteasome core is composed of 14 alpha and 14 beta subunits that assemble into four stacked heptameric rings, resulting in a barrel-shaped structure. The two inner rings, each composed of seven catalytic beta subunits, are sandwiched by two outer rings, each composed of seven alpha subunits. The catalytic chamber with the active sites is on the inside of the barrel. Has a gated structure, the ends of the cylinder being occluded by the N-termini of the alpha-subunits. Is capped at one or both ends by the proteasome regulatory ATPase, PAN.

Its subcellular location is the cytoplasm. With respect to regulation, the formation of the proteasomal ATPase PAN-20S proteasome complex, via the docking of the C-termini of PAN into the intersubunit pockets in the alpha-rings, triggers opening of the gate for substrate entry. Interconversion between the open-gate and close-gate conformations leads to a dynamic regulation of the 20S proteasome proteolysis activity. Its function is as follows. Component of the proteasome core, a large protease complex with broad specificity involved in protein degradation. The protein is Proteasome subunit alpha of Saccharolobus islandicus (strain M.16.4 / Kamchatka #3) (Sulfolobus islandicus).